A 234-amino-acid chain; its full sequence is Biotin transport ATP-binding protein BioM (234 aa).

The 230-residue stretch at 1 to 230 (MQAIDIGHVT…YIAAMQALAR (230 aa)) folds into the ABC transporter domain. Residue 35-42 (GRNGAGKS) coordinates ATP.

The protein belongs to the ABC transporter superfamily. As to quaternary structure, part of a biotin transporter holocomplex composed of BioM, BioN and BioY. BioMN complexes can be readily purified, but not BioMY complexes. Only the BioMNY complex has ATPase activity.

The protein resides in the cell inner membrane. In terms of biological role, required for biotin uptake under very low (pM) biotin concentrations but not under higher (nM) concentrations. The chain is Biotin transport ATP-binding protein BioM (bioM) from Rhodobacter capsulatus (strain ATCC BAA-309 / NBRC 16581 / SB1003).